An 81-amino-acid chain; its full sequence is Sulfur carrier protein TusA (81 aa).

Residue Cys-19 is the Cysteine persulfide intermediate of the active site.

Belongs to the sulfur carrier protein TusA family.

The protein localises to the cytoplasm. Sulfur carrier protein which probably makes part of a sulfur-relay system. The protein is Sulfur carrier protein TusA of Shewanella piezotolerans (strain WP3 / JCM 13877).